The primary structure comprises 162 residues: Cytochrome c-type biogenesis protein CcmE (162 aa).

Over 1–8 (MNPRRKKR) the chain is Cytoplasmic. The chain crosses the membrane as a helical; Signal-anchor for type II membrane protein span at residues 9–29 (LTLAVALIGGVAAITSLLLYA). Residues 30-162 (LNSNLNLFYT…YSQQKAPDTK (133 aa)) are Periplasmic-facing. Heme-binding residues include His131 and Tyr135. Residues 142 to 162 (EAMGQKHEKLDYSQQKAPDTK) form a disordered region. Polar residues predominate over residues 153 to 162 (YSQQKAPDTK).

It belongs to the CcmE/CycJ family.

It is found in the cell inner membrane. In terms of biological role, heme chaperone required for the biogenesis of c-type cytochromes. Transiently binds heme delivered by CcmC and transfers the heme to apo-cytochromes in a process facilitated by CcmF and CcmH. The sequence is that of Cytochrome c-type biogenesis protein CcmE from Shewanella baltica (strain OS223).